Reading from the N-terminus, the 436-residue chain is MTKPVVAIVGRPNVGKSTIFNRIVGERVSIVEDTPGVTRDRIYSSGEWLTHDFNVIDTGGIELTDAPFQTQIRAQAEIAIDEADVIIFMVNQREGLTQTDEMIAQMLYKTNKPVVLAVNKVDNPEMRTDIYDFYALGFGEPFPISGSHGLGLGDLLDEVANNFKDEEDDDYDEDTIKLSLIGRPNVGKSSLVNAILGEDRVIVSNIAGTTRDAIDTEYSYEDQDYVLIDTAGMRKKGKVYESTEKYSVLRALKAIERSNVVLVVLDAEEGIIEQDKRVAGYAHEEGKAVVIVVNKWDTLDKDSKTMKKFEDKIRQEFQFLDYAPIAFVSAKEKQRLRTLFPLIKEASENHKKRVQSSTLNEVITDAISMNPTPTDKGRRLKVFYATQVAVEPPTFVVFVNDAELMHFSYKRYLENQIRDAFGFEGTPIRIIPRKRN.

EngA-type G domains follow at residues 4–167 and 176–351; these read PVVA…KDEE and IKLS…ENHK. GTP is bound by residues 10–17, 57–61, 119–122, 182–189, 229–233, and 294–297; these read GRPNVGKS, DTGGI, NKVD, DTAGM, and NKWD. The 85-residue stretch at 352–436 folds into the KH-like domain; that stretch reads KRVQSSTLNE…PIRIIPRKRN (85 aa).

This sequence belongs to the TRAFAC class TrmE-Era-EngA-EngB-Septin-like GTPase superfamily. EngA (Der) GTPase family. As to quaternary structure, associates with the 50S ribosomal subunit.

In terms of biological role, GTPase that plays an essential role in the late steps of ribosome biogenesis. This is GTPase Der from Staphylococcus carnosus (strain TM300).